Consider the following 853-residue polypeptide: Eukaryotic translation initiation factor 3 subunit C (853 aa).

The interval 1 to 78 is disordered; it reads MSRFFAASDS…EDEDQNKVLK (78 aa). Residues 11–46 show a composition bias toward acidic residues; it reads SSEESSEEELYSDNEASAQEDSDKDSDDDDSDDDDS. Positions 599-773 constitute a PCI domain; it reads FHMHINLELL…SAIIFRKGVE (175 aa). Positions 798–853 are disordered; that stretch reads TLEQRTQGTANAFERQGGRGGRGGGRGRGGGRGGGVPRGGRNQQFTGGALGRAIQA. Gly residues predominate over residues 815-835; it reads GRGGRGGGRGRGGGRGGGVPR.

This sequence belongs to the eIF-3 subunit C family. In terms of assembly, component of the eukaryotic translation initiation factor 3 (eIF-3) complex.

It is found in the cytoplasm. Functionally, component of the eukaryotic translation initiation factor 3 (eIF-3) complex, which is involved in protein synthesis of a specialized repertoire of mRNAs and, together with other initiation factors, stimulates binding of mRNA and methionyl-tRNAi to the 40S ribosome. The eIF-3 complex specifically targets and initiates translation of a subset of mRNAs involved in cell proliferation. The protein is Eukaryotic translation initiation factor 3 subunit C of Phaeosphaeria nodorum (strain SN15 / ATCC MYA-4574 / FGSC 10173) (Glume blotch fungus).